Here is a 288-residue protein sequence, read N- to C-terminus: MKIYLNGKFVDEKDAKVSVFDHGLLYGDGVFEGIRAYDGVVFMLKEHIDRLYDSAKSLCIDIPLTKEEMIDVVLETLRVNNLRDAYIRLVVTRGVGDLGLDPRKCGKPTIFCIAIPMPPLLGEDGIRAITVSVRRLPVDVLNPAVKSLNYLNSVLAKIQANYAGVDEAFLLDDKGFVVEGTGDNIFIVKNGVLKTPPVYQSILKGITRDVVIKLAKEEGIEVVEEPLTLHDLYTADELFITGTAAEIVPVFEIDGRVINNKQVGEITKKLKEKFKDIRTKWGIKVYDE.

Lysine 146 is subject to N6-(pyridoxal phosphate)lysine.

Belongs to the class-IV pyridoxal-phosphate-dependent aminotransferase family. Pyridoxal 5'-phosphate is required as a cofactor.

The catalysed reaction is L-leucine + 2-oxoglutarate = 4-methyl-2-oxopentanoate + L-glutamate. It carries out the reaction L-isoleucine + 2-oxoglutarate = (S)-3-methyl-2-oxopentanoate + L-glutamate. The enzyme catalyses L-valine + 2-oxoglutarate = 3-methyl-2-oxobutanoate + L-glutamate. It participates in amino-acid biosynthesis; L-isoleucine biosynthesis; L-isoleucine from 2-oxobutanoate: step 4/4. The protein operates within amino-acid biosynthesis; L-leucine biosynthesis; L-leucine from 3-methyl-2-oxobutanoate: step 4/4. It functions in the pathway amino-acid biosynthesis; L-valine biosynthesis; L-valine from pyruvate: step 4/4. Acts on leucine, isoleucine and valine. The chain is Putative branched-chain-amino-acid aminotransferase (ilvE) from Methanocaldococcus jannaschii (strain ATCC 43067 / DSM 2661 / JAL-1 / JCM 10045 / NBRC 100440) (Methanococcus jannaschii).